A 217-amino-acid polypeptide reads, in one-letter code: UPF0502 protein PFLU_2135 (217 aa).

It belongs to the UPF0502 family.

This chain is UPF0502 protein PFLU_2135, found in Pseudomonas fluorescens (strain SBW25).